Reading from the N-terminus, the 89-residue chain is Small ribosomal subunit protein uS15 (89 aa).

This sequence belongs to the universal ribosomal protein uS15 family. In terms of assembly, part of the 30S ribosomal subunit. Forms a bridge to the 50S subunit in the 70S ribosome, contacting the 23S rRNA.

In terms of biological role, one of the primary rRNA binding proteins, it binds directly to 16S rRNA where it helps nucleate assembly of the platform of the 30S subunit by binding and bridging several RNA helices of the 16S rRNA. Its function is as follows. Forms an intersubunit bridge (bridge B4) with the 23S rRNA of the 50S subunit in the ribosome. This is Small ribosomal subunit protein uS15 from Burkholderia mallei (strain NCTC 10247).